A 216-amino-acid chain; its full sequence is MFKFLKRIKDDVNMVFEQDPAARTTLEVITSYAGVHAVWSHLIAHELYKKKKYVLARLISQVTRFFTGIEIHPGAQIGRRLFIDHGMGVVIGETCRIGDNVTIYQGVTLGGTGKERGKRHPDIGDNVLIAAGAKVLGNITINANVNIGANSVVLNSVPSYSTVVGIPGHIVKQDGRRIGKTFDHRNLPDPIYEQLKELEKQLEKTRNGEIQDDYII.

This sequence belongs to the transferase hexapeptide repeat family.

The protein resides in the cytoplasm. The enzyme catalyses L-serine + acetyl-CoA = O-acetyl-L-serine + CoA. Its pathway is amino-acid biosynthesis; L-cysteine biosynthesis; L-cysteine from L-serine: step 1/2. This is Serine acetyltransferase (cysE) from Staphylococcus xylosus.